The primary structure comprises 723 residues: Nucleolar protein 11 (723 aa).

Residue lysine 346 is modified to N6-methyllysine. Positions 549 to 572 are disordered; sequence FGPEDGNCSEDSQQLNDKPADTAH.

As to quaternary structure, interacts with UTP4. Interacts with FBL/fibrillarin in a transcription-dependent manner. May associate with the proposed t-UTP subcomplex of the SSU processome containing at least UTP4, WDR43, HEATR1, UTP15, WDR75.

The protein resides in the nucleus. It is found in the nucleolus. Functionally, ribosome biogenesis factor. May be required for both optimal rDNA transcription and small subunit (SSU) pre-rRNA processing at sites A', A0, 1 and 2b. The polypeptide is Nucleolar protein 11 (Nol11) (Mus musculus (Mouse)).